A 471-amino-acid polypeptide reads, in one-letter code: 3-isopropylmalate dehydratase large subunit (471 aa).

The [4Fe-4S] cluster site is built by Cys-347, Cys-407, and Cys-410.

The protein belongs to the aconitase/IPM isomerase family. LeuC type 1 subfamily. In terms of assembly, heterodimer of LeuC and LeuD. [4Fe-4S] cluster is required as a cofactor.

The enzyme catalyses (2R,3S)-3-isopropylmalate = (2S)-2-isopropylmalate. The protein operates within amino-acid biosynthesis; L-leucine biosynthesis; L-leucine from 3-methyl-2-oxobutanoate: step 2/4. Catalyzes the isomerization between 2-isopropylmalate and 3-isopropylmalate, via the formation of 2-isopropylmaleate. This is 3-isopropylmalate dehydratase large subunit from Anoxybacillus flavithermus (strain DSM 21510 / WK1).